The primary structure comprises 188 residues: Elongation factor P (188 aa).

It belongs to the elongation factor P family.

Its subcellular location is the cytoplasm. It participates in protein biosynthesis; polypeptide chain elongation. In terms of biological role, involved in peptide bond synthesis. Stimulates efficient translation and peptide-bond synthesis on native or reconstituted 70S ribosomes in vitro. Probably functions indirectly by altering the affinity of the ribosome for aminoacyl-tRNA, thus increasing their reactivity as acceptors for peptidyl transferase. The chain is Elongation factor P from Wolbachia pipientis wMel.